The sequence spans 177 residues: Large ribosomal subunit protein bL17 (177 aa).

The interval 136–177 is disordered; that stretch reads AEEEAPAVEAEATEAVEAPVEETAAAEAEAPAEEAADAEKAE. Residues 138-149 show a composition bias toward acidic residues; the sequence is EEAPAVEAEATE. Positions 150 to 164 are enriched in low complexity; the sequence is AVEAPVEETAAAEAE.

It belongs to the bacterial ribosomal protein bL17 family. As to quaternary structure, part of the 50S ribosomal subunit. Contacts protein L32.

This is Large ribosomal subunit protein bL17 from Bifidobacterium longum (strain NCC 2705).